The following is a 192-amino-acid chain: UPF0312 protein plu2095 (192 aa).

A signal peptide spans 1–23 (MLKKTLLGLTAGALLLNASSALA).

The protein belongs to the UPF0312 family. Type 1 subfamily.

The protein resides in the periplasm. The chain is UPF0312 protein plu2095 from Photorhabdus laumondii subsp. laumondii (strain DSM 15139 / CIP 105565 / TT01) (Photorhabdus luminescens subsp. laumondii).